The sequence spans 416 residues: Calreticulin (416 aa).

The first 27 residues, 1 to 27 (MATQRRANPSSLHLITVFSLLVAVVSA), serve as a signal peptide directing secretion. A glycan (N-linked (GlcNAc...) asparagine) is linked at asparagine 59. Cysteine 113 and cysteine 145 form a disulfide bridge. Residues tyrosine 117, lysine 119, tyrosine 136, and aspartate 143 each coordinate an alpha-D-glucoside. A glycan (N-linked (GlcNAc...) asparagine) is linked at asparagine 159. A run of 7 repeats spans residues 199 to 210 (KQSGSLYSDWDL), 218 to 229 (DPSAKKPEDWDE), 235 to 246 (DPEDKKPEGYDD), 253 to 264 (DPDAKKPEDWDD), 268 to 278 (GEWTAPTIPNP), 282 to 292 (GPWKPKKIKNP), and 296 to 306 (GKWKAPLIDNP). A 4 X approximate repeats region spans residues 199–264 (KQSGSLYSDW…DAKKPEDWDD (66 aa)). Over residues 215–225 (TIKDPSAKKPE) the composition is skewed to basic and acidic residues. The tract at residues 215 to 286 (TIKDPSAKKP…NPEYKGPWKP (72 aa)) is disordered. Composition is skewed to acidic residues over residues 226–236 (DWDEKEFIDDP) and 244–253 (YDDIPEEITD). The interval 268–306 (GEWTAPTIPNPEYKGPWKPKKIKNPNYKGKWKAPLIDNP) is 3 X approximate repeats. Position 326 (glutamate 326) interacts with an alpha-D-glucoside. The span at 355 to 380 (TWGKQKDAEKAAFEEAEKKREEEESK) shows a compositional bias: basic and acidic residues. The interval 355–416 (TWGKQKDAEK…SKDDEAHDEL (62 aa)) is disordered. Residues 386–403 (SDAEEDDDADDDSDDADD) are compositionally biased toward acidic residues. Residues 404–416 (KSESKDDEAHDEL) are compositionally biased toward basic and acidic residues. Residues 413 to 416 (HDEL) carry the Prevents secretion from ER motif.

This sequence belongs to the calreticulin family.

It is found in the endoplasmic reticulum lumen. In terms of biological role, molecular calcium-binding chaperone promoting folding, oligomeric assembly and quality control in the ER via the calreticulin/calnexin cycle. This lectin may interact transiently with almost all of the monoglucosylated glycoproteins that are synthesized in the ER. The polypeptide is Calreticulin (CAL1) (Nicotiana plumbaginifolia (Leadwort-leaved tobacco)).